Consider the following 1643-residue polypeptide: DNA-directed RNA polymerase subunit beta' (1643 aa).

Zn(2+) contacts are provided by Cys-64, Cys-66, Cys-79, and Cys-82. Residues Asp-684, Asp-686, and Asp-688 each contribute to the Mg(2+) site. Residues Cys-1046, Cys-1239, Cys-1246, and Cys-1249 each coordinate Zn(2+).

It belongs to the RNA polymerase beta' chain family. As to quaternary structure, the RNAP catalytic core consists of 2 alpha, 1 beta, 1 beta' and 1 omega subunit. When a sigma factor is associated with the core the holoenzyme is formed, which can initiate transcription. The cofactor is Mg(2+). Requires Zn(2+) as cofactor.

It catalyses the reaction RNA(n) + a ribonucleoside 5'-triphosphate = RNA(n+1) + diphosphate. Functionally, DNA-dependent RNA polymerase catalyzes the transcription of DNA into RNA using the four ribonucleoside triphosphates as substrates. The chain is DNA-directed RNA polymerase subunit beta' from Petrotoga mobilis (strain DSM 10674 / SJ95).